The primary structure comprises 78 residues: Protein SlyX homolog (78 aa).

The protein belongs to the SlyX family.

The protein is Protein SlyX homolog of Xanthomonas campestris pv. campestris (strain 8004).